A 347-amino-acid polypeptide reads, in one-letter code: Isopentenyl-diphosphate delta-isomerase (347 aa).

R9–K10 lines the substrate pocket. FMN contacts are provided by residues S67, S68 to T70, S98, and N127. S98 to R100 lines the substrate pocket. Residue Q162 participates in substrate binding. E163 provides a ligand contact to Mg(2+). FMN is bound by residues K194, T224, G274–R276, and A295–A296.

The protein belongs to the IPP isomerase type 2 family. As to quaternary structure, homooctamer. Dimer of tetramers. FMN is required as a cofactor. NADPH serves as cofactor. It depends on Mg(2+) as a cofactor.

It localises to the cytoplasm. The enzyme catalyses isopentenyl diphosphate = dimethylallyl diphosphate. Functionally, involved in the biosynthesis of isoprenoids. Catalyzes the 1,3-allylic rearrangement of the homoallylic substrate isopentenyl (IPP) to its allylic isomer, dimethylallyl diphosphate (DMAPP). The protein is Isopentenyl-diphosphate delta-isomerase of Cronobacter sakazakii (strain ATCC BAA-894) (Enterobacter sakazakii).